A 786-amino-acid polypeptide reads, in one-letter code: Phenylalanine--tRNA ligase beta subunit (786 aa).

One can recognise a tRNA-binding domain in the interval 39–150; sequence LRAPDRVVVG…GELKLGKPLH (112 aa). One can recognise a B5 domain in the interval 397–474; sequence YKPATITVDL…RLLGIDTILA (78 aa). 4 residues coordinate Mg(2+): Asp-452, Asp-458, Glu-461, and Glu-462. The region spanning 693–786 is the FDX-ACB domain; that stretch reads SKFPKLQRDL…LNHRFGAKLR (94 aa).

It belongs to the phenylalanyl-tRNA synthetase beta subunit family. Type 1 subfamily. In terms of assembly, tetramer of two alpha and two beta subunits. Mg(2+) serves as cofactor.

Its subcellular location is the cytoplasm. It catalyses the reaction tRNA(Phe) + L-phenylalanine + ATP = L-phenylalanyl-tRNA(Phe) + AMP + diphosphate + H(+). This chain is Phenylalanine--tRNA ligase beta subunit, found in Wolinella succinogenes (strain ATCC 29543 / DSM 1740 / CCUG 13145 / JCM 31913 / LMG 7466 / NCTC 11488 / FDC 602W) (Vibrio succinogenes).